A 231-amino-acid chain; its full sequence is MGQKINPIGLRLGINRTWDSRWYAGKAEYGRLLHEDVKIRELLHKELKQAAVARIVIERPHKKCRVTIHSARPGVVIGKKGADIDKLRKRVADITSSDVVLNIVEIRKPELDATLVAESIAQQLERRVAFRRAMKRAVQSAMRLGAEGIRINCSGRLGGAEIARMEWYREGRVPLHTLRADVDYGVATAFTTFGTCGVKVWIFKGEILEHDPMAQDKRQAGDDSRPRRDAA.

Positions Ile39–Arg107 constitute a KH type-2 domain.

Belongs to the universal ribosomal protein uS3 family. Part of the 30S ribosomal subunit. Forms a tight complex with proteins S10 and S14.

Its function is as follows. Binds the lower part of the 30S subunit head. Binds mRNA in the 70S ribosome, positioning it for translation. The chain is Small ribosomal subunit protein uS3 from Nitrobacter winogradskyi (strain ATCC 25391 / DSM 10237 / CIP 104748 / NCIMB 11846 / Nb-255).